A 148-amino-acid chain; its full sequence is Large-conductance mechanosensitive channel (148 aa).

2 helical membrane passes run 15–35 and 84–104; these read LDMA…KSLV and VGVF…VFLL.

The protein belongs to the MscL family. In terms of assembly, homopentamer.

The protein resides in the cell inner membrane. Channel that opens in response to stretch forces in the membrane lipid bilayer. May participate in the regulation of osmotic pressure changes within the cell. In Nitratidesulfovibrio vulgaris (strain DSM 19637 / Miyazaki F) (Desulfovibrio vulgaris), this protein is Large-conductance mechanosensitive channel.